Consider the following 515-residue polypeptide: Mucin-like protein Glc1.8b (515 aa).

Positions 1–20 (MSQITLIILVLAIGFSCTKS) are cleaved as a signal peptide. Over 21–467 (HPINSTRDGE…ANDIKKPAFP (447 aa)) the chain is Extracellular. Residues Asn-24, Asn-45, Asn-51, Asn-60, Asn-85, Asn-93, Asn-102, Asn-123, Asn-129, Asn-138, Asn-180, Asn-201, Asn-207, Asn-216, Asn-258, Asn-279, Asn-285, Asn-294, Asn-319, Asn-327, Asn-336, Asn-357, Asn-363, Asn-372, Asn-397, Asn-405, Asn-413, Asn-434, and Asn-441 are each glycosylated (N-linked (GlcNAc...) asparagine; by host). The tract at residues 80–114 (SKKDENITGQSEINTSAKSQPINSTRDGEDSGTDL) is disordered. The span at 86 to 104 (ITGQSEINTSAKSQPINST) shows a compositional bias: polar residues. The interval 314 to 358 (SKKDENITGQSEINTSAKSQPINSTRDGEDSGTDLKNLLTDPANT) is disordered. The span at 320-338 (ITGQSEINTSAKSQPINST) shows a compositional bias: polar residues. Residues 393–413 (RKDENVTGQSEFNISTNSNLN) are disordered. Residues 468–488 (YCIILITFQIVTVGMIIYLVF) traverse the membrane as a helical segment. At 489–515 (RTMRKPCQSERAIPLNSFGFGNNSSYE) the chain is on the cytoplasmic side.

This sequence belongs to the polydnaviridae Glc1.8 protein family.

The protein resides in the host membrane. Involved in suppression of the insect cellular immune response. Inhibits host hemocyte adhesion and phagocytosis. The polypeptide is Mucin-like protein Glc1.8b (O16) (Microplitis demolitor (Parasitoid wasp)).